The sequence spans 315 residues: Secreted mono- and diacylglycerol lipase LIP2 (315 aa).

Residues 1 to 21 (MACFRVILYLSVIFFVQCVFA) form the signal peptide. The cysteines at positions 68 and 308 are disulfide-linked. Asparagine 74 is a glycosylation site (N-linked (GlcNAc...) asparagine). The Nucleophile role is filled by serine 182. Residue aspartate 240 is part of the active site. Asparagine 265 carries N-linked (GlcNAc...) asparagine glycosylation. Residue histidine 292 is part of the active site.

It belongs to the AB hydrolase superfamily. Lipase family. Class 3 subfamily.

Its subcellular location is the secreted. It carries out the reaction a monoacylglycerol + H2O = glycerol + a fatty acid + H(+). The enzyme catalyses a diacylglycerol + H2O = a monoacylglycerol + a fatty acid + H(+). Its function is as follows. Secreted lipase involved in Dandruff and seborrheic dermatitis (D/SD) probably via lipase-mediated breakdown of sebaceous lipids and release of irritating free fatty acids. Shows activity against monoglyceride and diglyceride substrates and generates free oleic acid from the substrates mono- and diolein. Able to cleave the oleic acid from both the 1 and the 2 position of the glycerol backbone as 1,2 isomers of diolein were converted into oleic acid and glycerol. Due to an absence of fatty acid synthase genes in Malassezia species, secretory lipases are essential for the yeast to generate free fatty acids from degradation of sebum and assimilate them as lipid sources for growth. Plays an essential role at the pathogen-host interface during disease progression. Also performs the reverse reaction to build diacylglycerols from monoacylglycerols. This Malassezia restricta (Seborrheic dermatitis infection agent) protein is Secreted mono- and diacylglycerol lipase LIP2.